A 212-amino-acid chain; its full sequence is N-(5'-phosphoribosyl)anthranilate isomerase (212 aa).

The protein belongs to the TrpF family.

It catalyses the reaction N-(5-phospho-beta-D-ribosyl)anthranilate = 1-(2-carboxyphenylamino)-1-deoxy-D-ribulose 5-phosphate. It functions in the pathway amino-acid biosynthesis; L-tryptophan biosynthesis; L-tryptophan from chorismate: step 3/5. This is N-(5'-phosphoribosyl)anthranilate isomerase (trpF) from Cereibacter sphaeroides (strain ATCC 17023 / DSM 158 / JCM 6121 / CCUG 31486 / LMG 2827 / NBRC 12203 / NCIMB 8253 / ATH 2.4.1.) (Rhodobacter sphaeroides).